Reading from the N-terminus, the 422-residue chain is Phosphoribosylamine--glycine ligase (422 aa).

The ATP-grasp domain maps to 107 to 312 (KEVMAAAGVR…LGQLLYAAGT (206 aa)). An ATP-binding site is contributed by 138–193 (PPVGDLSWVVKDDRLAAGKGVVVTSDRDVARTHAAGLLEAGHPVLLESYLDGPEVS). Mg(2+)-binding residues include glutamate 282 and asparagine 284.

It belongs to the GARS family. Requires Mg(2+) as cofactor. Mn(2+) serves as cofactor.

The catalysed reaction is 5-phospho-beta-D-ribosylamine + glycine + ATP = N(1)-(5-phospho-beta-D-ribosyl)glycinamide + ADP + phosphate + H(+). The protein operates within purine metabolism; IMP biosynthesis via de novo pathway; N(1)-(5-phospho-D-ribosyl)glycinamide from 5-phospho-alpha-D-ribose 1-diphosphate: step 2/2. In Mycobacterium leprae (strain TN), this protein is Phosphoribosylamine--glycine ligase.